We begin with the raw amino-acid sequence, 550 residues long: Methyl-coenzyme M reductase I subunit alpha (550 aa).

Glutamine 147 lines the coenzyme F430 pocket. Residues arginine 225, 256 to 257 (KH), and arginine 270 contribute to the coenzyme B site. Position 257 is a pros-methylhistidine (histidine 257). Arginine 271 bears the 5-methylarginine mark. Tyrosine 333 serves as a coordination point for coenzyme M. Glutamine 400 carries the 2-methylglutamine modification. Position 444 (tyrosine 444) interacts with coenzyme M. Position 445 is a 1-thioglycine (glycine 445). The residue at position 450 (aspartate 450) is a (Z)-2,3-didehydroaspartate. Cysteine 452 is subject to S-methylcysteine.

It belongs to the methyl-coenzyme M reductase alpha subunit family. MCR is a hexamer of two alpha, two beta, and two gamma chains, forming a dimer of heterotrimers. It depends on coenzyme F430 as a cofactor. The alpha subunit contains six modified amino acids near the active site region. Is methylated on His-257, Arg-271, Gln-400 and Cys-452, probably by the action of specific S-adenosylmethionine-dependent methyltransferases. Also contains a thioglycine at position 445, forming a thiopeptide bond. Contains a didehydroaspartate residue at position 450. The methylation on C5 of Arg-271 is a post-translational methylation not essential in vivo, but which plays a role for the stability and structural integrity of MCR.

It localises to the cytoplasm. The catalysed reaction is coenzyme B + methyl-coenzyme M = methane + coenzyme M-coenzyme B heterodisulfide. Its pathway is one-carbon metabolism; methyl-coenzyme M reduction; methane from methyl-coenzyme M: step 1/1. Methyl-coenzyme M reductase activity is inhibited by 3-nitrooxypropanol (3-NOP) in vitro and in vivo, by oxidation of its active site Ni(I), which stops both growth and methanogenesis. Is also inhibited by the reaction product CoM-S-S-CoB. Component of the methyl-coenzyme M reductase (MCR) I that catalyzes the reductive cleavage of methyl-coenzyme M (CoM-S-CH3 or 2-(methylthio)ethanesulfonate) using coenzyme B (CoB or 7-mercaptoheptanoylthreonine phosphate) as reductant which results in the production of methane and the mixed heterodisulfide of CoB and CoM (CoM-S-S-CoB). This is the final step in methanogenesis. Neither N-6-mercaptohexanoylthreonine phosphate (H-S-HxoTP) nor N-8-mercaptooctanoylthreonine phosphate (H-SOcoTP) nor any other thiol compound such as CoA or CoM can substitute for CoB as the electron donor. This chain is Methyl-coenzyme M reductase I subunit alpha (mcrA), found in Methanothermobacter marburgensis (strain ATCC BAA-927 / DSM 2133 / JCM 14651 / NBRC 100331 / OCM 82 / Marburg) (Methanobacterium thermoautotrophicum).